Here is a 96-residue protein sequence, read N- to C-terminus: Co-chaperonin GroES (96 aa).

Belongs to the GroES chaperonin family. In terms of assembly, heptamer of 7 subunits arranged in a ring. Interacts with the chaperonin GroEL.

It is found in the cytoplasm. In terms of biological role, together with the chaperonin GroEL, plays an essential role in assisting protein folding. The GroEL-GroES system forms a nano-cage that allows encapsulation of the non-native substrate proteins and provides a physical environment optimized to promote and accelerate protein folding. GroES binds to the apical surface of the GroEL ring, thereby capping the opening of the GroEL channel. This chain is Co-chaperonin GroES, found in Polynucleobacter necessarius subsp. necessarius (strain STIR1).